A 493-amino-acid polypeptide reads, in one-letter code: Signal recognition particle subunit SRP54 3 (493 aa).

A G-domain region spans residues 1-294; sequence MVLADVGGSI…NVEPFVARLL (294 aa). GTP contacts are provided by residues 107–114, 189–193, and 247–250; these read GLQGSGKT, DTSGR, and TKLD. The M-domain stretch occupies residues 295-493; sequence GRGDLPGLID…KMLAGMRGGA (199 aa).

This sequence belongs to the GTP-binding SRP family. SRP54 subfamily. Component of a signal recognition particle (SRP) complex that consists of a 7SL RNA molecule of 300 nucleotides and six protein subunits: SRP72, SRP68, SRP54, SRP19, SRP14 and SRP9.

The protein localises to the cytoplasm. It localises to the endoplasmic reticulum. It carries out the reaction GTP + H2O = GDP + phosphate + H(+). Functionally, component of the signal recognition particle (SRP) complex, a ribonucleoprotein complex that mediates the cotranslational targeting of secretory and membrane proteins to the endoplasmic reticulum (ER). As part of the SRP complex, associates with the SRP receptor (SR) component SRPRA to target secretory proteins to the endoplasmic reticulum membrane. Binds to the signal sequence of presecretory proteins when they emerge from the ribosomes. Displays basal GTPase activity, and stimulates reciprocal GTPase activation of the SR subunit SRPRA. Forms a guanosine 5'-triphosphate (GTP)-dependent complex with the SR subunit SRPRA. SR compaction and GTPase mediated rearrangement of SR drive SRP-mediated cotranslational protein translocation into the ER. Requires the presence of SRP9/SRP14 and/or SRP19 to stably interact with RNA. The chain is Signal recognition particle subunit SRP54 3 (SRP54-3) from Hordeum vulgare (Barley).